We begin with the raw amino-acid sequence, 259 residues long: Proteasome subunit alpha (259 aa).

This sequence belongs to the peptidase T1A family. In terms of assembly, the 20S proteasome core is composed of 14 alpha and 14 beta subunits that assemble into four stacked heptameric rings, resulting in a barrel-shaped structure. The two inner rings, each composed of seven catalytic beta subunits, are sandwiched by two outer rings, each composed of seven alpha subunits. The catalytic chamber with the active sites is on the inside of the barrel. Has a gated structure, the ends of the cylinder being occluded by the N-termini of the alpha-subunits. Is capped at one or both ends by the proteasome regulatory ATPase, PAN.

It localises to the cytoplasm. With respect to regulation, the formation of the proteasomal ATPase PAN-20S proteasome complex, via the docking of the C-termini of PAN into the intersubunit pockets in the alpha-rings, triggers opening of the gate for substrate entry. Interconversion between the open-gate and close-gate conformations leads to a dynamic regulation of the 20S proteasome proteolysis activity. Its function is as follows. Component of the proteasome core, a large protease complex with broad specificity involved in protein degradation. This is Proteasome subunit alpha from Methanococcus maripaludis (strain C6 / ATCC BAA-1332).